A 236-amino-acid chain; its full sequence is UPF0257 lipoprotein YnfC (236 aa).

Positions 1-16 (MKYKLLPCLLAIFLTG) are cleaved as a signal peptide. Cys17 carries N-palmitoyl cysteine lipidation. Residue Cys17 is the site of S-diacylglycerol cysteine attachment.

It belongs to the UPF0257 family.

The protein localises to the cell membrane. This Shigella flexneri protein is UPF0257 lipoprotein YnfC (ynfC).